The following is a 731-amino-acid chain: Fatty acid oxidation complex subunit alpha (731 aa).

The enoyl-CoA hydratase stretch occupies residues 15–204 (TEKTSAFSLT…RQGLVDEAVP (190 aa)). The segment at 320–729 (KPIHRVGILG…FYPPADKDNS (410 aa)) is 3-hydroxyacyl-CoA dehydrogenase.

The protein in the N-terminal section; belongs to the enoyl-CoA hydratase/isomerase family. In the central section; belongs to the 3-hydroxyacyl-CoA dehydrogenase family. Heterotetramer of two alpha chains (FadJ) and two beta chains (FadI).

The protein localises to the cytoplasm. It catalyses the reaction a (3S)-3-hydroxyacyl-CoA = a (2E)-enoyl-CoA + H2O. The enzyme catalyses a 4-saturated-(3S)-3-hydroxyacyl-CoA = a (3E)-enoyl-CoA + H2O. It carries out the reaction a (3S)-3-hydroxyacyl-CoA + NAD(+) = a 3-oxoacyl-CoA + NADH + H(+). The catalysed reaction is (3S)-3-hydroxybutanoyl-CoA = (3R)-3-hydroxybutanoyl-CoA. The protein operates within lipid metabolism; fatty acid beta-oxidation. Functionally, catalyzes the formation of a hydroxyacyl-CoA by addition of water on enoyl-CoA. Also exhibits 3-hydroxyacyl-CoA epimerase and 3-hydroxyacyl-CoA dehydrogenase activities. This is Fatty acid oxidation complex subunit alpha from Pectobacterium atrosepticum (strain SCRI 1043 / ATCC BAA-672) (Erwinia carotovora subsp. atroseptica).